The following is a 599-amino-acid chain: Stromal 70 kDa heat shock-related protein, chloroplastic (599 aa).

Residues 545-573 (NQPGAGGEPGAAQAQHQEQSSARQIQRAK) form a disordered region. Low complexity predominate over residues 554-568 (GAAQAQHQEQSSARQ).

Belongs to the heat shock protein 70 family.

It is found in the plastid. The protein localises to the chloroplast stroma. Functionally, interacts with newly imported chloroplast proteins to assist in their maturation. The chain is Stromal 70 kDa heat shock-related protein, chloroplastic (CHSP70) from Spinacia oleracea (Spinach).